Reading from the N-terminus, the 456-residue chain is MKKLLFITAPLLLSVLTASCSKSNVPPPTPLAEKPPRETFVKVIWKRKTGNGNGGLANYNVAPAYANDTVFVPNQNGMAYALAITNGKIIWKNDTGTNLSVQPNTIANAVIFGSIKGTLTAIDDKDGQTLWRTDAPSSIFSQPTIYDNSIYLQTHDGSVSAFDARNGSKEWSVANNIPEITLPSNSSPIILNNTVMIGNAFGAVLGFTIKSGDRTINIPIAISHGSSPADKMVDITANPMLYDHYLIFAAYQGAIVALDKDSGKMLWAKKASIINNMAINNGVIFTTQDDSELKAYNIQTGDTVWTQDTLKWRKITAPIYYKGLIVVADYQGYLHFFNSLNGEYLGRYKLTSKSDIFDYGISGQLVPTEKGIIIEADNGTTYLVDAYSNKVIYDSILSDYQVDKGKSVARIYPLEQDKPTKATAPLATKTTQTTETKSKGINATIIIGDFSKGKPS.

A signal peptide spans M1–S19. C20 carries the N-palmitoyl cysteine lipid modification. A lipid anchor (S-diacylglycerol cysteine) is attached at C20.

It belongs to the BamB family. As to quaternary structure, part of the Bam complex.

The protein resides in the cell outer membrane. Part of the outer membrane protein assembly complex, which is involved in assembly and insertion of beta-barrel proteins into the outer membrane. This is Outer membrane protein assembly factor BamB from Francisella tularensis subsp. tularensis (strain SCHU S4 / Schu 4).